The primary structure comprises 474 residues: tRNA-2-methylthio-N(6)-dimethylallyladenosine synthase (474 aa).

In terms of domain architecture, MTTase N-terminal spans 3 to 120; it reads KKLHIKTWGC…LPEMINHVNG (118 aa). [4Fe-4S] cluster-binding residues include Cys12, Cys49, Cys83, Cys157, Cys161, and Cys164. The region spanning 143–375 is the Radical SAM core domain; sequence RAEGPTAFVS…QERITQQAMQ (233 aa). A TRAM domain is found at 378–441; it reads RRMKGKVQRI…PNSLRGVLLR (64 aa).

This sequence belongs to the methylthiotransferase family. MiaB subfamily. As to quaternary structure, monomer. It depends on [4Fe-4S] cluster as a cofactor.

Its subcellular location is the cytoplasm. The catalysed reaction is N(6)-dimethylallyladenosine(37) in tRNA + (sulfur carrier)-SH + AH2 + 2 S-adenosyl-L-methionine = 2-methylsulfanyl-N(6)-dimethylallyladenosine(37) in tRNA + (sulfur carrier)-H + 5'-deoxyadenosine + L-methionine + A + S-adenosyl-L-homocysteine + 2 H(+). Its function is as follows. Catalyzes the methylthiolation of N6-(dimethylallyl)adenosine (i(6)A), leading to the formation of 2-methylthio-N6-(dimethylallyl)adenosine (ms(2)i(6)A) at position 37 in tRNAs that read codons beginning with uridine. The polypeptide is tRNA-2-methylthio-N(6)-dimethylallyladenosine synthase (Sodalis glossinidius (strain morsitans)).